Consider the following 141-residue polypeptide: Hemoglobin subunit alpha (141 aa).

Residues 1–141 form the Globin domain; sequence VLSAEDKANV…VSTVLTSKYR (141 aa). S3 bears the Phosphoserine mark. 2 positions are modified to N6-succinyllysine: K7 and K11. K16 is modified (N6-acetyllysine; alternate). Residue K16 is modified to N6-succinyllysine; alternate. Y24 bears the Phosphotyrosine mark. Phosphoserine is present on S35. Position 40 is an N6-succinyllysine (K40). Residue S49 is modified to Phosphoserine. H58 provides a ligand contact to O2. H87 provides a ligand contact to heme b. S102 carries the post-translational modification Phosphoserine. At T108 the chain carries Phosphothreonine. Phosphoserine occurs at positions 124 and 131. T134 and T137 each carry phosphothreonine. S138 is subject to Phosphoserine.

It belongs to the globin family. Heterotetramer of two alpha chains and two beta chains. Red blood cells.

Involved in oxygen transport from the lung to the various peripheral tissues. This chain is Hemoglobin subunit alpha, found in Peromyscus crinitus (Canyon mouse).